The primary structure comprises 146 residues: Ribonuclease H (146 aa).

The RNase H type-1 domain maps to 1–143 (MQKKVTIYTD…CDYLATQAIK (143 aa)). Mg(2+) is bound by residues Asp-10, Glu-48, Asp-70, and Asp-135.

The protein belongs to the RNase H family. Monomer. Mg(2+) serves as cofactor.

Its subcellular location is the cytoplasm. The catalysed reaction is Endonucleolytic cleavage to 5'-phosphomonoester.. Functionally, endonuclease that specifically degrades the RNA of RNA-DNA hybrids. In Chlorobium phaeobacteroides (strain BS1), this protein is Ribonuclease H.